The primary structure comprises 1098 residues: Bifunctional helicase and thymine dioxygenase JBP2 (1098 aa).

Residues 1 to 540 are thymine dioxygenase; sequence MLNGLTRVST…PPLFVPTRLA (540 aa). Residues H415, D417, and H465 each contribute to the Fe cation site. R479 serves as a coordination point for 2-oxoglutarate. Residues 541-1098 form a DNA Helicase region; sequence SHLAPVQLAA…RYQESVRESE (558 aa). A Helicase ATP-binding domain is found at 555–730; the sequence is VERTEKQSGC…YRLVGWVNKG (176 aa). ATP is bound at residue 568 to 575; sequence MTMGLGKT. The short motif at 681–684 is the DEAH box element; that stretch reads DEGH. Positions 897-1057 constitute a Helicase C-terminal domain; it reads VLVDIVLRVQ…ALPDELEDCA (161 aa).

The protein in the C-terminal section; belongs to the SNF2/RAD54 helicase family. In the N-terminal section; belongs to the TET family. JBP2 subfamily. It depends on Fe(2+) as a cofactor.

It localises to the nucleus. The enzyme catalyses ATP + H2O = ADP + phosphate + H(+). It catalyses the reaction thymine + 2-oxoglutarate + O2 = 5-hydroxymethyluracil + succinate + CO2. Functionally, dioxygenase that catalyzes the first step of DNA base J (beta-d-glucosyl-HOMedU) biosynthesis by converting thymine to 5-hydroxymethyluracil (HOMedU). DNA base J is a hypermodified thymidine residue found in the genome of kinetoplastid parasites, which is localized primarily to repetitive DNA, namely the telomeres, and is implicated in the regulation of antigenic variation. Probably also acts as a DNA helicase. Recognizes and binds specific regions of the genome, hydrolyzes ATP and allows the DNA base J de novo synthesis. Involved in initial synthesis of DNA base J, JBP1 being able to act via the basal level of DNA base J and propagate further synthesis. In contrast to JBP1, it does not specifically bind DNA base J, however it binds chromatin. The chain is Bifunctional helicase and thymine dioxygenase JBP2 (JBP2) from Leishmania infantum.